We begin with the raw amino-acid sequence, 358 residues long: Peptide chain release factor 1 (358 aa).

Glutamine 233 is modified (N5-methylglutamine).

This sequence belongs to the prokaryotic/mitochondrial release factor family. Methylated by PrmC. Methylation increases the termination efficiency of RF1.

The protein localises to the cytoplasm. Its function is as follows. Peptide chain release factor 1 directs the termination of translation in response to the peptide chain termination codons UAG and UAA. The sequence is that of Peptide chain release factor 1 from Beijerinckia indica subsp. indica (strain ATCC 9039 / DSM 1715 / NCIMB 8712).